The primary structure comprises 55 residues: uncharacterized protein (55 aa).

A disordered region spans residues Met-1 to Ser-30.

This is an uncharacterized protein from Frog virus 3 (isolate Goorha) (FV-3).